A 147-amino-acid chain; its full sequence is Large ribosomal subunit protein uL15 (147 aa).

The tract at residues Met1 to Leu57 is disordered. Positions Thr30 to Gly44 are enriched in basic residues.

The protein belongs to the universal ribosomal protein uL15 family. In terms of assembly, part of the 50S ribosomal subunit.

In terms of biological role, binds to the 23S rRNA. This Thermotoga neapolitana (strain ATCC 49049 / DSM 4359 / NBRC 107923 / NS-E) protein is Large ribosomal subunit protein uL15.